Here is a 250-residue protein sequence, read N- to C-terminus: MPLYRARPRSLYSRRRRATNRRRRYRRRRLHIGRIRSKYTIFNVKQTQNISFTFFGTGSPDKNKWQAMSLEAVQSSGTSPKPGINLRFAVFGDRLPGTGNQYHYPFDYYMIRMVKVELRPAFNPFQRVRTQGSTYIDKEGNITTTTSGGEWNVDPYAAMSSRKTWSPHRYHKRVFVPKPTIQQGGTGTNIWSTWYTPGGRQLWLNSIQDNVVFYGMGMSLRQAEDTAAPLTVEATITYYIRFGQWTGLSP.

Residues 1–24 (MPLYRARPRSLYSRRRRATNRRRR) form a disordered region. Residues 1 to 38 (MPLYRARPRSLYSRRRRATNRRRRYRRRRLHIGRIRSK) form a DNA-binding region. Residues 5–38 (RARPRSLYSRRRRATNRRRRYRRRRLHIGRIRSK) are nuclear localization signals.

It belongs to the circoviridae capsid protein family. In terms of assembly, homomultimer. Assembles in the nucleus, presumably in an immature form, then migrates to the cytoplasm once assembled as mature virion. Interacts with Rep; this interaction relocates Rep into the nucleus.

The protein localises to the host nucleus. The protein resides in the virion. Functionally, self-assembles to form the virion icosahedral capsid with a T=1 symmetry. This very small capsid (17 - 22 nm in diameter) allows the virus to be very stable in the environment and resistant to some disinfectants, including detergents. Essential for the initial attachment to heparan sulfate moieties and chondroitin sulfate B of the host cell surface proteoglycans. After attachment, the virus is endocytosed and traffics to the nucleus. The capsid protein binds and transports the viral genome and Rep across the nuclear envelope. This chain is Probable capsid protein (Cap), found in Anser (geese).